Consider the following 438-residue polypeptide: Aspartate--tRNA(Asp) ligase (438 aa).

Glu170 is an L-aspartate binding site. The segment at 192-195 (QLYK) is aspartate. Arg214 provides a ligand contact to L-aspartate. Residues 214 to 216 (RAE), 222 to 224 (RHL), and Glu361 contribute to the ATP site. Positions 361 and 364 each coordinate Mg(2+). Residues Ser364 and Arg368 each contribute to the L-aspartate site. 409 to 412 (GAER) serves as a coordination point for ATP.

This sequence belongs to the class-II aminoacyl-tRNA synthetase family. Type 2 subfamily. As to quaternary structure, homodimer. It depends on Mg(2+) as a cofactor.

Its subcellular location is the cytoplasm. The enzyme catalyses tRNA(Asp) + L-aspartate + ATP = L-aspartyl-tRNA(Asp) + AMP + diphosphate. Catalyzes the attachment of L-aspartate to tRNA(Asp) in a two-step reaction: L-aspartate is first activated by ATP to form Asp-AMP and then transferred to the acceptor end of tRNA(Asp). The chain is Aspartate--tRNA(Asp) ligase from Pyrococcus furiosus (strain ATCC 43587 / DSM 3638 / JCM 8422 / Vc1).